A 380-amino-acid chain; its full sequence is PqqA peptide cyclase (380 aa).

The Radical SAM core domain occupies 12-228 (FGIPLAVLLE…EEARERLKGR (217 aa)). [4Fe-4S] cluster-binding residues include Cys26, Cys30, and Cys33.

The protein belongs to the radical SAM superfamily. PqqE family. Interacts with PqqD. The interaction is necessary for activity of PqqE. Requires [4Fe-4S] cluster as cofactor.

It catalyses the reaction [PQQ precursor protein] + S-adenosyl-L-methionine = E-Y cross-linked-[PQQ precursor protein] + 5'-deoxyadenosine + L-methionine + H(+). It participates in cofactor biosynthesis; pyrroloquinoline quinone biosynthesis. Functionally, catalyzes the cross-linking of a glutamate residue and a tyrosine residue in the PqqA protein as part of the biosynthesis of pyrroloquinoline quinone (PQQ). The polypeptide is PqqA peptide cyclase (Bradyrhizobium diazoefficiens (strain JCM 10833 / BCRC 13528 / IAM 13628 / NBRC 14792 / USDA 110)).